A 364-amino-acid polypeptide reads, in one-letter code: tRNA 2-selenouridine synthase (364 aa).

The Rhodanese domain occupies 14-137 (LLADTPLIDV…LRQTAIQATW (124 aa)). The active-site S-selanylcysteine intermediate is the C97.

The protein belongs to the SelU family. In terms of assembly, monomer.

It catalyses the reaction 5-methylaminomethyl-2-thiouridine(34) in tRNA + selenophosphate + (2E)-geranyl diphosphate + H2O + H(+) = 5-methylaminomethyl-2-selenouridine(34) in tRNA + (2E)-thiogeraniol + phosphate + diphosphate. The catalysed reaction is 5-methylaminomethyl-2-thiouridine(34) in tRNA + (2E)-geranyl diphosphate = 5-methylaminomethyl-S-(2E)-geranyl-thiouridine(34) in tRNA + diphosphate. The enzyme catalyses 5-methylaminomethyl-S-(2E)-geranyl-thiouridine(34) in tRNA + selenophosphate + H(+) = 5-methylaminomethyl-2-(Se-phospho)selenouridine(34) in tRNA + (2E)-thiogeraniol. It carries out the reaction 5-methylaminomethyl-2-(Se-phospho)selenouridine(34) in tRNA + H2O = 5-methylaminomethyl-2-selenouridine(34) in tRNA + phosphate. Involved in the post-transcriptional modification of the uridine at the wobble position (U34) of tRNA(Lys), tRNA(Glu) and tRNA(Gln). Catalyzes the conversion of 2-thiouridine (S2U-RNA) to 2-selenouridine (Se2U-RNA). Acts in a two-step process involving geranylation of 2-thiouridine (S2U) to S-geranyl-2-thiouridine (geS2U) and subsequent selenation of the latter derivative to 2-selenouridine (Se2U) in the tRNA chain. This is tRNA 2-selenouridine synthase from Salmonella paratyphi B (strain ATCC BAA-1250 / SPB7).